Here is a 163-residue protein sequence, read N- to C-terminus: NADH-quinone oxidoreductase subunit I (163 aa).

2 4Fe-4S ferredoxin-type domains span residues 53 to 83 and 94 to 123; these read LRRY…IEAG and TLYE…ETRE. Residues Cys63, Cys66, Cys69, Cys73, Cys103, Cys106, Cys109, and Cys113 each contribute to the [4Fe-4S] cluster site.

The protein belongs to the complex I 23 kDa subunit family. NDH-1 is composed of 14 different subunits. Subunits NuoA, H, J, K, L, M, N constitute the membrane sector of the complex. Requires [4Fe-4S] cluster as cofactor.

It localises to the cell inner membrane. The enzyme catalyses a quinone + NADH + 5 H(+)(in) = a quinol + NAD(+) + 4 H(+)(out). Functionally, NDH-1 shuttles electrons from NADH, via FMN and iron-sulfur (Fe-S) centers, to quinones in the respiratory chain. The immediate electron acceptor for the enzyme in this species is believed to be ubiquinone. Couples the redox reaction to proton translocation (for every two electrons transferred, four hydrogen ions are translocated across the cytoplasmic membrane), and thus conserves the redox energy in a proton gradient. The protein is NADH-quinone oxidoreductase subunit I of Alkalilimnicola ehrlichii (strain ATCC BAA-1101 / DSM 17681 / MLHE-1).